A 323-amino-acid chain; its full sequence is Porphobilinogen deaminase (323 aa).

The residue at position 240 (Cys-240) is an S-(dipyrrolylmethanemethyl)cysteine.

It belongs to the HMBS family. In terms of assembly, monomer. Requires dipyrromethane as cofactor.

The catalysed reaction is 4 porphobilinogen + H2O = hydroxymethylbilane + 4 NH4(+). Its pathway is porphyrin-containing compound metabolism; protoporphyrin-IX biosynthesis; coproporphyrinogen-III from 5-aminolevulinate: step 2/4. Functionally, tetrapolymerization of the monopyrrole PBG into the hydroxymethylbilane pre-uroporphyrinogen in several discrete steps. The sequence is that of Porphobilinogen deaminase from Sulfurovum sp. (strain NBC37-1).